The sequence spans 371 residues: Trans-enoyl reductase calK (371 aa).

Position 51-54 (51-54) interacts with NADP(+); that stretch reads NDHK. Substrate is bound at residue 145 to 152; that stretch reads WSTISLAF. NADP(+) contacts are provided by residues 181 to 184, 204 to 207, Y222, and 269 to 270; these read GTAS, SNQS, and LE. 289–293 is a substrate binding site; that stretch reads GFQVL. Residue 359 to 360 participates in NADP(+) binding; that stretch reads VR.

This sequence belongs to the zinc-containing alcohol dehydrogenase family. Monomer.

It participates in secondary metabolite biosynthesis. Its function is as follows. Trans-enoyl reductase; part of the gene cluster that mediates the biosynthesis of calbistrin A and related compounds. Calbistrin A is a secondary metabolite with an interesting structure that was recently found to have bioactivity against leukemia cells. It consists of two polyketides linked by an ester bond: a bicyclic decalin containing polyketide and a linear 12 carbon dioic acid structure. The polyketide synthase calA is probably responsible for forming the decalin moiety. Because calA lacks a designated enoylreductase (ER) domain, the required activity is provided by the trans-enoyl reductase calK. Following release from the PKS, calF then probably catalyzes the oxidation and the subsequent Diels Alder cycloisomerization that lead to the formation of the decalin moiety. The decalin polyketide backbone includes two C-methyl groups, at C7 and C11 in backbone, of which the C7 position is probably methylated by the methyltransferase domain of calA. A candidate for adding the methyl group at C11, if not done by CalA, is the cluster methyltransferase calH. Several additional tailoring enzymes within the cluster could be involved in the modification of the decalin polyketide product. Those include the 3 cytochrome P450 monooxygenases CalE, CalG and CalL, of which one might be responsible for the introduction of the extra hydroxyl group attached to the backbone of the decalin moiety, at position C9 in the backbone, that allows for attachment of the linear moiety. One tailoring enzyme activity that is expected to be involved in biosynthesis of calbistrin is an acyltransferase for connecting the two polyketide synthase products, and which could be performed by the cluster acyltransferase calJ. The enzyme responsible for the biosynthesis of the linear moiety, probably a second PKS, has not been identified yet. This Penicillium decumbens protein is Trans-enoyl reductase calK.